Reading from the N-terminus, the 519-residue chain is Exodeoxyribonuclease 7 large subunit (519 aa).

Residues 500-519 (VGRGKTRKPKEEPPAQGSLL) form a disordered region.

Belongs to the XseA family. Heterooligomer composed of large and small subunits.

It is found in the cytoplasm. It catalyses the reaction Exonucleolytic cleavage in either 5'- to 3'- or 3'- to 5'-direction to yield nucleoside 5'-phosphates.. Functionally, bidirectionally degrades single-stranded DNA into large acid-insoluble oligonucleotides, which are then degraded further into small acid-soluble oligonucleotides. The protein is Exodeoxyribonuclease 7 large subunit of Cereibacter sphaeroides (strain ATCC 17023 / DSM 158 / JCM 6121 / CCUG 31486 / LMG 2827 / NBRC 12203 / NCIMB 8253 / ATH 2.4.1.) (Rhodobacter sphaeroides).